We begin with the raw amino-acid sequence, 496 residues long: FAD-linked oxidoreductase AFUA_1G00980 (496 aa).

An N-terminal signal peptide occupies residues 1 to 21 (MRRATLIPLAIWVAGAAAAAA). N-linked (GlcNAc...) asparagine glycosylation is found at asparagine 49, asparagine 122, asparagine 205, asparagine 258, asparagine 344, asparagine 351, asparagine 371, and asparagine 382. The FAD-binding PCMH-type domain occupies 64 to 243 (MAPTYAVSVR…VEAVYQVTDL (180 aa)).

The protein belongs to the oxygen-dependent FAD-linked oxidoreductase family. Requires FAD as cofactor.

Its function is as follows. FAD-linked oxidoreductase; part of the gene cluster that mediates the biosynthesis of fumigermin that inhibits germination of spores of the inducing S.rapamycinicus, and thus helps the fungus to defend resources in the shared habitat against a bacterial competitor. The partially reducing polyketide synthase fngA alone is sufficient for the production of fumigermin. FgnA catalyzes the condensation of 3 malonyl-CoA units to an acetyl-CoA starter, and 3 methylations to yield fumigermin. It is remarkable that the five cluster genes including fgnA are conserved in distantly related fungi, supporting the assumption of a fumigermin cluster; it is thus possible that originally all five genes were functional, but that the genes encoding tailoring enzymes became inactive from mutations, similar to the case of the fgnA gene in strains A1163 and Af293. The chain is FAD-linked oxidoreductase AFUA_1G00980 from Aspergillus fumigatus (strain ATCC MYA-4609 / CBS 101355 / FGSC A1100 / Af293) (Neosartorya fumigata).